The chain runs to 182 residues: Large ribosomal subunit protein bL25 (182 aa).

The protein belongs to the bacterial ribosomal protein bL25 family. CTC subfamily. Part of the 50S ribosomal subunit; part of the 5S rRNA/L5/L18/L25 subcomplex. Contacts the 5S rRNA. Binds to the 5S rRNA independently of L5 and L18.

In terms of biological role, this is one of the proteins that binds to the 5S RNA in the ribosome where it forms part of the central protuberance. This chain is Large ribosomal subunit protein bL25, found in Borrelia duttonii (strain Ly).